A 361-amino-acid polypeptide reads, in one-letter code: MFPASTPHPCPHPYPPTAAKAGDGWRFGARGCRPEPPSFLPGYRQLMAAEYFDSYQRAQLMALLSRMGPRPVSSRDAAVQVNPRRDASVQCSLGRRTLQPGRRRASPDARPGSCQPRSPARAGRPPRSWRTVALYSPVTFGGLSSSLEVAGDRQTPTKGEGRPAPTGTREPEPGEVAVMKAVPQPQSEEGDVQAEGQDGQEQPPREDPDSVAAMQSEPGSEEPPPAVEMAQDPSDVAASRDRASPQSTEQDKERLRFQFLEQKYGYYHCKDCNIRWESAYVWCVQGTSKVYFKQFCRVCEKSYNPYRVEDITCQSCKRTRCACPVRLRHVDPKRPHRQDLCGRCKDKRLSCDSTFSFKYII.

Disordered regions lie at residues 68 to 129 (GPRP…PRSW) and 142 to 252 (GLSS…EQDK). Over residues 116-128 (PRSPARAGRPPRS) the composition is skewed to low complexity. Position 155 is a phosphothreonine (Thr155). The segment covering 238-252 (ASRDRASPQSTEQDK) has biased composition (basic and acidic residues). The segment at 263-346 (KYGYYHCKDC…RQDLCGRCKD (84 aa)) adopts a 3CxxC-type zinc-finger fold.

It belongs to the ZAR1 family. As to quaternary structure, interacts with YBX2. Post-translationally, phosphorylation by CDK1 does not regulate formation of MARDO (mitochondria-associated ribonucleoprotein domain) membraneless compartment. In terms of processing, ubiquitinated and degradaded by the proteasome during oocyte meiotic maturation, leading to MARDO (mitochondria-associated ribonucleoprotein domain) membraneless compartment dissolution.

It localises to the cytoplasm. The protein localises to the cytoplasmic ribonucleoprotein granule. In terms of biological role, mRNA-binding protein that mediates formation of MARDO (mitochondria-associated ribonucleoprotein domain), a membraneless compartment that stores maternal mRNAs in oocytes. MARDO assembly around mitochondria is directed by an increase in mitochondrial membrane potential during oocyte growth. Promotes formation of MARDO phase-separated membraneless compartment by undergoing liquid-liquid phase separation upon binding to maternal mRNAs. Binds to the 3'-UTR of maternal mRNAs. Maternal mRNAs stored in the MARDO are translationally repressed. Essential for female fertility and oocyte-to-embryo transition by coordinating maternal mRNA storage, translation and degradation. This Rattus norvegicus (Rat) protein is Zygote arrest protein 1.